The primary structure comprises 110 residues: Cell cycle protein GpsB (110 aa).

Residues K37–A63 are a coiled coil. A disordered region spans residues K59–H79. The segment covering A60–S75 has biased composition (low complexity).

Belongs to the GpsB family. As to quaternary structure, forms polymers through the coiled coil domains. Interacts with PBP1, MreC and EzrA.

It localises to the cytoplasm. In terms of biological role, divisome component that associates with the complex late in its assembly, after the Z-ring is formed, and is dependent on DivIC and PBP2B for its recruitment to the divisome. Together with EzrA, is a key component of the system that regulates PBP1 localization during cell cycle progression. Its main role could be the removal of PBP1 from the cell pole after pole maturation is completed. Also contributes to the recruitment of PBP1 to the division complex. Not essential for septum formation. The protein is Cell cycle protein GpsB of Streptococcus thermophilus (strain CNRZ 1066).